Reading from the N-terminus, the 223-residue chain is Ribonuclease 3 (223 aa).

The RNase III domain occupies 4 to 127 (LEEFERNLGY…VMGAIYLEAG (124 aa)). E40 is a Mg(2+) binding site. D44 is an active-site residue. Mg(2+) contacts are provided by D113 and E116. Residue E116 is part of the active site. The 70-residue stretch at 154–223 (DYKTALQEVT…AKIALEKIKK (70 aa)) folds into the DRBM domain.

This sequence belongs to the ribonuclease III family. As to quaternary structure, homodimer. Mg(2+) is required as a cofactor.

The protein localises to the cytoplasm. The catalysed reaction is Endonucleolytic cleavage to 5'-phosphomonoester.. Functionally, digests double-stranded RNA. Involved in the processing of primary rRNA transcript to yield the immediate precursors to the large and small rRNAs (23S and 16S). Processes some mRNAs, and tRNAs when they are encoded in the rRNA operon. Processes pre-crRNA and tracrRNA of type II CRISPR loci if present in the organism. This chain is Ribonuclease 3, found in Campylobacter concisus (strain 13826).